The primary structure comprises 314 residues: 1D-myo-inositol 2-acetamido-2-deoxy-alpha-D-glucopyranoside deacetylase 2 (314 aa).

Positions 25, 28, and 161 each coordinate Zn(2+).

The protein belongs to the MshB deacetylase family. Zn(2+) serves as cofactor.

The enzyme catalyses 1D-myo-inositol 2-acetamido-2-deoxy-alpha-D-glucopyranoside + H2O = 1D-myo-inositol 2-amino-2-deoxy-alpha-D-glucopyranoside + acetate. Functionally, catalyzes the deacetylation of 1D-myo-inositol 2-acetamido-2-deoxy-alpha-D-glucopyranoside (GlcNAc-Ins) in the mycothiol biosynthesis pathway. The chain is 1D-myo-inositol 2-acetamido-2-deoxy-alpha-D-glucopyranoside deacetylase 2 from Frankia casuarinae (strain DSM 45818 / CECT 9043 / HFP020203 / CcI3).